A 242-amino-acid chain; its full sequence is MRPLTMSGHFLLAPIPESSSDYLLPKDIKLAVLGASCVGKSAMIVRFLTKRFIGDYEPNTGKLYSRLVYVEGDQLSLQIQDTPGGIQAQDSLGQMVDSLSKCVQWAEGFLLVYSITDYESYQSIRPLYQHIRKVHPDGKAPVVIVGNKGDLLHARQVQTHEGLQLANELGSLFLEISTSENYEDVCDVFQHLCKEVSKLHSLSGERRRASIIPRPRSPNMQDLKRRFRQALSSKAKAASTLG.

Positions 17-241 are small GTPase-like; it reads ESSSDYLLPK…SSKAKAASTL (225 aa). GTP contacts are provided by residues 34 to 41, 81 to 85, and 147 to 150; these read GASCVGKS, DTPGG, and NKGD.

The protein belongs to the small GTPase superfamily. Ras family. Interacts with UBF/UBTF.

The protein localises to the nucleus. The protein resides in the nucleolus. The enzyme catalyses GTP + H2O = GDP + phosphate + H(+). In terms of biological role, regulator of rDNA transcription. Acts in cooperation UBF/UBTF and positively regulates RNA polymerase I transcription. The polypeptide is Ras-like protein family member 11A (Rattus norvegicus (Rat)).